Here is a 234-residue protein sequence, read N- to C-terminus: (5-formylfuran-3-yl)methyl phosphate synthase (234 aa).

The active-site Schiff-base intermediate with substrate is K27. The active-site Proton acceptor is the K85.

It belongs to the MfnB family.

It carries out the reaction 2 D-glyceraldehyde 3-phosphate = 4-(hydroxymethyl)-2-furancarboxaldehyde phosphate + phosphate + 2 H2O. It participates in cofactor biosynthesis; methanofuran biosynthesis. Catalyzes the formation of 4-(hydroxymethyl)-2-furancarboxaldehyde phosphate (4-HFC-P) from two molecules of glyceraldehyde-3-P (GA-3-P). This Methanosarcina mazei (strain ATCC BAA-159 / DSM 3647 / Goe1 / Go1 / JCM 11833 / OCM 88) (Methanosarcina frisia) protein is (5-formylfuran-3-yl)methyl phosphate synthase.